We begin with the raw amino-acid sequence, 59 residues long: UPF0337 protein PP_4561 (59 aa).

Residues 27-43 (TDNEKLRAEGKAQELKG) are compositionally biased toward basic and acidic residues. The interval 27–59 (TDNEKLRAEGKAQELKGEAQQVKGNVKDAVKKP) is disordered.

Belongs to the UPF0337 (CsbD) family.

This is UPF0337 protein PP_4561 from Pseudomonas putida (strain ATCC 47054 / DSM 6125 / CFBP 8728 / NCIMB 11950 / KT2440).